Consider the following 272-residue polypeptide: Shikimate dehydrogenase (NADP(+)) (272 aa).

Shikimate-binding positions include 14–16 (SKS) and threonine 61. Lysine 65 functions as the Proton acceptor in the catalytic mechanism. NADP(+) is bound at residue glutamate 77. Residues asparagine 86 and aspartate 102 each coordinate shikimate. NADP(+) contacts are provided by residues 126–130 (GAGGA), 149–154 (NRTVSR), and methionine 213. Tyrosine 215 contacts shikimate. Position 237 (glycine 237) interacts with NADP(+).

This sequence belongs to the shikimate dehydrogenase family. As to quaternary structure, homodimer.

It carries out the reaction shikimate + NADP(+) = 3-dehydroshikimate + NADPH + H(+). It functions in the pathway metabolic intermediate biosynthesis; chorismate biosynthesis; chorismate from D-erythrose 4-phosphate and phosphoenolpyruvate: step 4/7. Functionally, involved in the biosynthesis of the chorismate, which leads to the biosynthesis of aromatic amino acids. Catalyzes the reversible NADPH linked reduction of 3-dehydroshikimate (DHSA) to yield shikimate (SA). The chain is Shikimate dehydrogenase (NADP(+)) from Escherichia coli (strain SMS-3-5 / SECEC).